The following is a 101-amino-acid chain: Large ribosomal subunit protein uL23 (101 aa).

Belongs to the universal ribosomal protein uL23 family. As to quaternary structure, part of the 50S ribosomal subunit. Contacts protein L29, and trigger factor when it is bound to the ribosome.

Its function is as follows. One of the early assembly proteins it binds 23S rRNA. One of the proteins that surrounds the polypeptide exit tunnel on the outside of the ribosome. Forms the main docking site for trigger factor binding to the ribosome. This chain is Large ribosomal subunit protein uL23, found in Leptospira biflexa serovar Patoc (strain Patoc 1 / Ames).